Here is a 398-residue protein sequence, read N- to C-terminus: Phosphoglycerate kinase (398 aa).

Residues 23–25 (DFN), Arg38, 61–64 (HLGK), Arg122, and Arg155 contribute to the substrate site. Residues Lys206, Gly297, Glu328, and 354–357 (GGDS) each bind ATP.

The protein belongs to the phosphoglycerate kinase family. As to quaternary structure, monomer.

The protein resides in the cytoplasm. It catalyses the reaction (2R)-3-phosphoglycerate + ATP = (2R)-3-phospho-glyceroyl phosphate + ADP. It participates in carbohydrate degradation; glycolysis; pyruvate from D-glyceraldehyde 3-phosphate: step 2/5. The polypeptide is Phosphoglycerate kinase (Clostridium novyi (strain NT)).